Consider the following 642-residue polypeptide: Threonine--tRNA ligase (642 aa).

The 61-residue stretch at 1–61 (MPVITLPDGS…ENDATLAIIT (61 aa)) folds into the TGS domain. The tract at residues 243 to 534 (DHRKIGKQLD…LTEEFAGFFP (292 aa)) is catalytic. Positions 334, 385, and 511 each coordinate Zn(2+).

It belongs to the class-II aminoacyl-tRNA synthetase family. In terms of assembly, homodimer. It depends on Zn(2+) as a cofactor.

The protein resides in the cytoplasm. The catalysed reaction is tRNA(Thr) + L-threonine + ATP = L-threonyl-tRNA(Thr) + AMP + diphosphate + H(+). Catalyzes the attachment of threonine to tRNA(Thr) in a two-step reaction: L-threonine is first activated by ATP to form Thr-AMP and then transferred to the acceptor end of tRNA(Thr). Also edits incorrectly charged L-seryl-tRNA(Thr). This Salmonella paratyphi C (strain RKS4594) protein is Threonine--tRNA ligase.